Consider the following 161-residue polypeptide: Nucleotide-binding protein Pnec_0318 (161 aa).

This sequence belongs to the YajQ family.

Its function is as follows. Nucleotide-binding protein. The sequence is that of Nucleotide-binding protein Pnec_0318 from Polynucleobacter necessarius subsp. necessarius (strain STIR1).